The sequence spans 450 residues: Chromosomal replication initiator protein DnaA (450 aa).

A domain I, interacts with DnaA modulators region spans residues 1–69 (MHDVWRQATE…VGALSVTAGK (69 aa)). The tract at residues 69–113 (KKYFIELVVQEEDQNAEVPQAEDLIIKGHQEIEQPVTSQPETSSS) is domain II. The interval 114–330 (SLNPKYTFEL…GMLIRLGAYS (217 aa)) is domain III, AAA+ region. The ATP site is built by G158, G160, K161, and S162. The domain IV, binds dsDNA stretch occupies residues 331–450 (SLQGIPITLD…IEDIKLILLK (120 aa)).

It belongs to the DnaA family. Oligomerizes as a right-handed, spiral filament on DNA at oriC.

The protein localises to the cytoplasm. In terms of biological role, plays an essential role in the initiation and regulation of chromosomal replication. ATP-DnaA binds to the origin of replication (oriC) to initiate formation of the DNA replication initiation complex once per cell cycle. Binds the DnaA box (a 9 base pair repeat at the origin) and separates the double-stranded (ds)DNA. Forms a right-handed helical filament on oriC DNA; dsDNA binds to the exterior of the filament while single-stranded (ss)DNA is stabiized in the filament's interior. The ATP-DnaA-oriC complex binds and stabilizes one strand of the AT-rich DNA unwinding element (DUE), permitting loading of DNA polymerase. After initiation quickly degrades to an ADP-DnaA complex that is not apt for DNA replication. Binds acidic phospholipids. The polypeptide is Chromosomal replication initiator protein DnaA (Pelobacter propionicus (strain DSM 2379 / NBRC 103807 / OttBd1)).